Consider the following 182-residue polypeptide: Adenine phosphoribosyltransferase (182 aa).

Belongs to the purine/pyrimidine phosphoribosyltransferase family. Homodimer.

The protein localises to the cytoplasm. It catalyses the reaction AMP + diphosphate = 5-phospho-alpha-D-ribose 1-diphosphate + adenine. Its pathway is purine metabolism; AMP biosynthesis via salvage pathway; AMP from adenine: step 1/1. Functionally, catalyzes a salvage reaction resulting in the formation of AMP, that is energically less costly than de novo synthesis. This is Adenine phosphoribosyltransferase from Pseudomonas putida (strain GB-1).